The following is a 137-amino-acid chain: MEKTLSIIKPDAVKKGVIGQILTRFESNGLRIAATKKIQLSEKEAQEFYAVHKDRPFFKDLVEFMISGPVVVSVLEGKNAVLKNRELMGATNPKEAAAGTIRADFADSIDANAVHGSDSLENAKIEIEFFFSKTEIL.

ATP is bound by residues Lys-9, Phe-57, Arg-85, Thr-91, Arg-102, and Asn-112. The Pros-phosphohistidine intermediate role is filled by His-115.

Belongs to the NDK family. As to quaternary structure, homotetramer. The cofactor is Mg(2+).

Its subcellular location is the cytoplasm. The catalysed reaction is a 2'-deoxyribonucleoside 5'-diphosphate + ATP = a 2'-deoxyribonucleoside 5'-triphosphate + ADP. It carries out the reaction a ribonucleoside 5'-diphosphate + ATP = a ribonucleoside 5'-triphosphate + ADP. Its function is as follows. Major role in the synthesis of nucleoside triphosphates other than ATP. The ATP gamma phosphate is transferred to the NDP beta phosphate via a ping-pong mechanism, using a phosphorylated active-site intermediate. This is Nucleoside diphosphate kinase from Campylobacter lari (strain RM2100 / D67 / ATCC BAA-1060).